We begin with the raw amino-acid sequence, 238 residues long: Hydroxyacylglutathione hydrolase (238 aa).

Residues H52, H54, D56, H57, H108, D125, and H163 each coordinate Zn(2+).

Belongs to the metallo-beta-lactamase superfamily. Glyoxalase II family. Monomer. Requires Zn(2+) as cofactor.

It catalyses the reaction an S-(2-hydroxyacyl)glutathione + H2O = a 2-hydroxy carboxylate + glutathione + H(+). The protein operates within secondary metabolite metabolism; methylglyoxal degradation; (R)-lactate from methylglyoxal: step 2/2. Thiolesterase that catalyzes the hydrolysis of S-D-lactoyl-glutathione to form glutathione and D-lactic acid. The polypeptide is Hydroxyacylglutathione hydrolase (Haemophilus influenzae (strain ATCC 51907 / DSM 11121 / KW20 / Rd)).